The following is a 390-amino-acid chain: MNLHEYQSKHLLKKYNIPVPASEVVFNPDAAVDAAAKIGGDRWVVKAQVHAGGRGKAGGVRLVKNKEELKSAVKALLGMRLVTYQTDERGQPVNQILVEQTSDIARELYLGAVIDRASQRIVFMASTEGGVEIEKVAEKSPEKILKVTVDPAIGLQPFQCRQLFFGLGLQDLKQMRSFTDIVMGLYRLFTERDLSLLEINPLVITGSGELICLDAKINIDDSALYRQSELREMRDTTQEDEHETMAQQWELNYIKLDGNIGCMVNGAGLAMATMDLIKLSGGDPANFLDVGGSATKERVTEAFKIIVSDKNVKGILVNIFGGIVRCDLIADGIISAVKEVGIDVPVVVRLEGNNAQLGAKKLADSGMNIIAAKGFADAAEQIVKQVGVIA.

Residues 9–245 enclose the ATP-grasp domain; that stretch reads KHLLKKYNIP…TTQEDEHETM (237 aa). ATP-binding positions include Lys46, 53 to 55, Glu99, Ser102, and Glu107; that span reads GRG. Residues Asn200 and Asp214 each contribute to the Mg(2+) site. Residues Asn265 and 322–324 contribute to the substrate site; that span reads GIV.

Belongs to the succinate/malate CoA ligase beta subunit family. Heterotetramer of two alpha and two beta subunits. Mg(2+) serves as cofactor.

The enzyme catalyses succinate + ATP + CoA = succinyl-CoA + ADP + phosphate. It carries out the reaction GTP + succinate + CoA = succinyl-CoA + GDP + phosphate. Its pathway is carbohydrate metabolism; tricarboxylic acid cycle; succinate from succinyl-CoA (ligase route): step 1/1. Succinyl-CoA synthetase functions in the citric acid cycle (TCA), coupling the hydrolysis of succinyl-CoA to the synthesis of either ATP or GTP and thus represents the only step of substrate-level phosphorylation in the TCA. The beta subunit provides nucleotide specificity of the enzyme and binds the substrate succinate, while the binding sites for coenzyme A and phosphate are found in the alpha subunit. This chain is Succinate--CoA ligase [ADP-forming] subunit beta, found in Coxiella burnetii (strain CbuG_Q212) (Coxiella burnetii (strain Q212)).